The sequence spans 725 residues: Glutamine-dependent NAD(+) synthetase (725 aa).

In terms of domain architecture, CN hydrolase spans 5 to 275; the sequence is VTVATCALNQ…VEVLTATLDL (271 aa). Residue glutamate 45 is the Proton acceptor; for glutaminase activity of the active site. The active-site For glutaminase activity is the lysine 114. Cysteine 175 (nucleophile; for glutaminase activity) is an active-site residue. Residues 325–706 form a ligase region; sequence YHRPEEEISL…KASQTREEQV (382 aa). 355–362 provides a ligand contact to ATP; that stretch reads PLSGGVDS. The active site involves serine 357.

It in the C-terminal section; belongs to the NAD synthetase family. Homohexamer. Highly expressed in small intestine, kidney, liver and testis. Weakly expressed in skeletal muscle, spleen, lung, heart and brain.

The catalysed reaction is deamido-NAD(+) + L-glutamine + ATP + H2O = L-glutamate + AMP + diphosphate + NAD(+) + H(+). The protein operates within cofactor biosynthesis; NAD(+) biosynthesis; NAD(+) from deamido-NAD(+) (L-Gln route): step 1/1. Catalyzes the final step of the nicotinamide adenine dinucleotide (NAD) de novo synthesis pathway, the ATP-dependent amidation of deamido-NAD using L-glutamine as a nitrogen source. The sequence is that of Glutamine-dependent NAD(+) synthetase (Nadsyn1) from Mus musculus (Mouse).